Consider the following 407-residue polypeptide: Arginine biosynthesis bifunctional protein ArgJ (407 aa).

Substrate is bound by residues T157, K183, T194, E280, N402, and T407. T194 acts as the Nucleophile in catalysis.

The protein belongs to the ArgJ family. As to quaternary structure, heterotetramer of two alpha and two beta chains.

It is found in the cytoplasm. It carries out the reaction N(2)-acetyl-L-ornithine + L-glutamate = N-acetyl-L-glutamate + L-ornithine. It catalyses the reaction L-glutamate + acetyl-CoA = N-acetyl-L-glutamate + CoA + H(+). The protein operates within amino-acid biosynthesis; L-arginine biosynthesis; L-ornithine and N-acetyl-L-glutamate from L-glutamate and N(2)-acetyl-L-ornithine (cyclic): step 1/1. It participates in amino-acid biosynthesis; L-arginine biosynthesis; N(2)-acetyl-L-ornithine from L-glutamate: step 1/4. Catalyzes two activities which are involved in the cyclic version of arginine biosynthesis: the synthesis of N-acetylglutamate from glutamate and acetyl-CoA as the acetyl donor, and of ornithine by transacetylation between N(2)-acetylornithine and glutamate. The chain is Arginine biosynthesis bifunctional protein ArgJ from Oceanobacillus iheyensis (strain DSM 14371 / CIP 107618 / JCM 11309 / KCTC 3954 / HTE831).